The chain runs to 157 residues: Small ribosomal subunit protein uS7 (157 aa).

This sequence belongs to the universal ribosomal protein uS7 family. As to quaternary structure, part of the 30S ribosomal subunit. Contacts proteins S9 and S11.

In terms of biological role, one of the primary rRNA binding proteins, it binds directly to 16S rRNA where it nucleates assembly of the head domain of the 30S subunit. Is located at the subunit interface close to the decoding center, probably blocks exit of the E-site tRNA. This Phenylobacterium zucineum (strain HLK1) protein is Small ribosomal subunit protein uS7.